The sequence spans 231 residues: Small ribosomal subunit protein uS3 (231 aa).

A KH type-2 domain is found at 39–107; that stretch reads IRKFIKEKLF…QVSVNIVEIK (69 aa).

It belongs to the universal ribosomal protein uS3 family. As to quaternary structure, part of the 30S ribosomal subunit. Forms a tight complex with proteins S10 and S14.

In terms of biological role, binds the lower part of the 30S subunit head. Binds mRNA in the 70S ribosome, positioning it for translation. In Pelotomaculum thermopropionicum (strain DSM 13744 / JCM 10971 / SI), this protein is Small ribosomal subunit protein uS3.